Consider the following 543-residue polypeptide: Chaperonin GroEL 1 (543 aa).

ATP contacts are provided by residues 29–32 (TLGP), K50, 86–90 (DGTTT), G414, and D493. A disordered region spans residues 524-543 (KEDKGAPAGMGGMPPGGGMY). Residues 531 to 543 (AGMGGMPPGGGMY) are compositionally biased toward gly residues.

Belongs to the chaperonin (HSP60) family. As to quaternary structure, forms a cylinder of 14 subunits composed of two heptameric rings stacked back-to-back. Interacts with the co-chaperonin GroES.

The protein localises to the cytoplasm. The enzyme catalyses ATP + H2O + a folded polypeptide = ADP + phosphate + an unfolded polypeptide.. Together with its co-chaperonin GroES, plays an essential role in assisting protein folding. The GroEL-GroES system forms a nano-cage that allows encapsulation of the non-native substrate proteins and provides a physical environment optimized to promote and accelerate protein folding. The polypeptide is Chaperonin GroEL 1 (Syntrophobacter fumaroxidans (strain DSM 10017 / MPOB)).